The sequence spans 525 residues: Probable protein kinase UbiB (525 aa).

In terms of domain architecture, Protein kinase spans 118-500 (DFERVPVASA…QKRTNRLLQG (383 aa)). ATP-binding positions include 124–132 (VASASIAQV) and Lys150. Asp285 functions as the Proton acceptor in the catalytic mechanism. The chain crosses the membrane as a helical span at residues 501–521 (LLLFGVAVGVGAVLARAFLAL).

Belongs to the ABC1 family. UbiB subfamily.

It is found in the cell inner membrane. Its pathway is cofactor biosynthesis; ubiquinone biosynthesis [regulation]. Its function is as follows. Is probably a protein kinase regulator of UbiI activity which is involved in aerobic coenzyme Q (ubiquinone) biosynthesis. This Paraburkholderia phytofirmans (strain DSM 17436 / LMG 22146 / PsJN) (Burkholderia phytofirmans) protein is Probable protein kinase UbiB.